The sequence spans 745 residues: UPF0508 protein YJR030C (745 aa).

This sequence belongs to the UPF0508 family.

This chain is UPF0508 protein YJR030C, found in Saccharomyces cerevisiae (strain ATCC 204508 / S288c) (Baker's yeast).